A 694-amino-acid polypeptide reads, in one-letter code: Elongation factor G (694 aa).

A tr-type G domain is found at 8 to 287 (EDYRNFGIMA…AVVEFLPAPT (280 aa)). GTP contacts are provided by residues 17–24 (AHIDAGKT), 86–90 (DTPGH), and 140–143 (NKMD).

Belongs to the TRAFAC class translation factor GTPase superfamily. Classic translation factor GTPase family. EF-G/EF-2 subfamily.

It is found in the cytoplasm. In terms of biological role, catalyzes the GTP-dependent ribosomal translocation step during translation elongation. During this step, the ribosome changes from the pre-translocational (PRE) to the post-translocational (POST) state as the newly formed A-site-bound peptidyl-tRNA and P-site-bound deacylated tRNA move to the P and E sites, respectively. Catalyzes the coordinated movement of the two tRNA molecules, the mRNA and conformational changes in the ribosome. In Brucella canis (strain ATCC 23365 / NCTC 10854 / RM-666), this protein is Elongation factor G.